Reading from the N-terminus, the 340-residue chain is DNA-directed RNA polymerase subunit alpha (340 aa).

The alpha N-terminal domain (alpha-NTD) stretch occupies residues 1–233 (MIQNEIPIPA…NLFIPLLHEK (233 aa)). The interval 263–340 (RKEISFKHIF…LPKNKFSIND (78 aa)) is alpha C-terminal domain (alpha-CTD).

This sequence belongs to the RNA polymerase alpha chain family. As to quaternary structure, in plastids the minimal PEP RNA polymerase catalytic core is composed of four subunits: alpha, beta, beta', and beta''. When a (nuclear-encoded) sigma factor is associated with the core the holoenzyme is formed, which can initiate transcription.

Its subcellular location is the plastid. The protein resides in the chloroplast. The catalysed reaction is RNA(n) + a ribonucleoside 5'-triphosphate = RNA(n+1) + diphosphate. DNA-dependent RNA polymerase catalyzes the transcription of DNA into RNA using the four ribonucleoside triphosphates as substrates. This Anthoceros angustus (Hornwort) protein is DNA-directed RNA polymerase subunit alpha (rpoA).